The following is a 148-amino-acid chain: Large ribosomal subunit protein uL15 (148 aa).

A disordered region spans residues 1–61 (MELNELRPAV…GGQMPMQRRL (61 aa)). The segment covering 30–39 (TATKGHKGQK) has biased composition (basic residues).

The protein belongs to the universal ribosomal protein uL15 family. As to quaternary structure, part of the 50S ribosomal subunit.

Binds to the 23S rRNA. This Geobacter sulfurreducens (strain ATCC 51573 / DSM 12127 / PCA) protein is Large ribosomal subunit protein uL15.